The chain runs to 480 residues: Gasdermin-C3 (480 aa).

The interval methionine 1 to lysine 226 is triggers pyroptosis.

It belongs to the gasdermin family. Homooligomer; homooligomeric ring-shaped pore complex containing 27-28 subunits when inserted in the membrane. Post-translationally, cleavage by CASP8 relieves autoinhibition by releasing the N-terminal moiety (Gasdermin-C3, N-terminal) that initiates pyroptosis. In terms of processing, palmitoylated.

It is found in the cytoplasm. It localises to the cytosol. The protein resides in the cell membrane. The full-length protein before cleavage is inactive: intramolecular interactions between N- and C-terminal domains mediate autoinhibition in the absence of activation signal. The intrinsic pyroptosis-inducing activity is carried by the released N-terminal moiety (Gasdermin-C3, N-terminal) following cleavage by caspase CASP8. This form constitutes the precursor of the pore-forming protein: upon cleavage, the released N-terminal moiety (Gasdermin-C3, N-terminal) binds to membranes and forms pores, triggering pyroptosis. Functionally, pore-forming protein that causes membrane permeabilization and pyroptosis. Produced by the cleavage of gasdermin-C3 by caspase CASP8 in response to death signals. After cleavage, moves to the plasma membrane where it strongly binds to membrane inner leaflet lipids. Homooligomerizes within the membrane and forms pores of 10-15 nanometers (nm) of inner diameter, triggering pyroptosis. In Mus musculus (Mouse), this protein is Gasdermin-C3.